Consider the following 195-residue polypeptide: Protein LIGHT-DEPENDENT SHORT HYPOCOTYLS 7 (195 aa).

Disordered regions lie at residues 1 to 41 (MASH…LSRY) and 154 to 195 (SQAK…NLAS). Pro residues predominate over residues 21–36 (QPQPQPHQPQSPPNPP). Residues 40–167 (RYESQKRRDW…ARGVPYKKRK (128 aa)) enclose the ALOG domain. The segment covering 162 to 175 (PYKKRKKRKKRNPM) has biased composition (basic residues). A Nuclear localization signal motif is present at residues 165-169 (KRKKR). Residues 184 to 195 (TTGTSSSSNLAS) show a composition bias toward low complexity.

It belongs to the plant homeotic and developmental regulators ALOG protein family.

It is found in the nucleus. Its function is as follows. Probable transcription regulator that acts as a developmental regulator by promoting cell growth in response to light. The polypeptide is Protein LIGHT-DEPENDENT SHORT HYPOCOTYLS 7 (LSH7) (Arabidopsis thaliana (Mouse-ear cress)).